The primary structure comprises 499 residues: Probable cytosol aminopeptidase (499 aa).

Positions 269 and 274 each coordinate Mn(2+). K281 is an active-site residue. Positions 292, 351, and 353 each coordinate Mn(2+). R355 is an active-site residue.

It belongs to the peptidase M17 family. Mn(2+) serves as cofactor.

The protein resides in the cytoplasm. It catalyses the reaction Release of an N-terminal amino acid, Xaa-|-Yaa-, in which Xaa is preferably Leu, but may be other amino acids including Pro although not Arg or Lys, and Yaa may be Pro. Amino acid amides and methyl esters are also readily hydrolyzed, but rates on arylamides are exceedingly low.. The catalysed reaction is Release of an N-terminal amino acid, preferentially leucine, but not glutamic or aspartic acids.. Functionally, presumably involved in the processing and regular turnover of intracellular proteins. Catalyzes the removal of unsubstituted N-terminal amino acids from various peptides. This is Probable cytosol aminopeptidase from Actinobacillus pleuropneumoniae serotype 3 (strain JL03).